The following is a 166-amino-acid chain: Large ribosomal subunit protein uL10 (166 aa).

This sequence belongs to the universal ribosomal protein uL10 family. Part of the ribosomal stalk of the 50S ribosomal subunit. The N-terminus interacts with L11 and the large rRNA to form the base of the stalk. The C-terminus forms an elongated spine to which L12 dimers bind in a sequential fashion forming a multimeric L10(L12)X complex.

Forms part of the ribosomal stalk, playing a central role in the interaction of the ribosome with GTP-bound translation factors. The chain is Large ribosomal subunit protein uL10 from Shewanella woodyi (strain ATCC 51908 / MS32).